The following is a 195-amino-acid chain: U8 snoRNA-decapping enzyme (195 aa).

One can recognise a Nudix hydrolase domain in the interval 18–168 (GWRHACHALL…LENTFIGNAR (151 aa)). The substrate site is built by H24, R50, and F57. G59, E76, E80, and H99 together coordinate Mn(2+). A Nudix box motif is present at residues 61–82 (FVDLRDGSLEDGLNRELGEELG). Substrate contacts are provided by N166 and Q170. E173 is a Mn(2+) binding site.

Belongs to the Nudix hydrolase family. NUDT16 subfamily. In terms of assembly, homodimer. Mg(2+) is required as a cofactor. Mn(2+) serves as cofactor. Requires Co(2+) as cofactor.

It is found in the nucleus. The protein localises to the nucleolus. Its subcellular location is the nucleoplasm. The protein resides in the cytoplasm. The catalysed reaction is a 5'-end (N(7)-methyl 5'-triphosphoguanosine)-ribonucleoside in mRNA + H2O = N(7)-methyl-GDP + a 5'-end phospho-ribonucleoside in mRNA + 2 H(+). It catalyses the reaction IDP + H2O = IMP + phosphate + H(+). It carries out the reaction dIDP + H2O = dIMP + phosphate + H(+). The enzyme catalyses a 5'-end NAD(+)-phospho-ribonucleoside in mRNA + H2O = a 5'-end phospho-ribonucleoside in mRNA + NAD(+) + H(+). The catalysed reaction is a 5'-end FAD-phospho-ribonucleoside in mRNA + H2O = a 5'-end phospho-adenosine-phospho-ribonucleoside in mRNA + FMN + 2 H(+). It catalyses the reaction a 5'-end CoA-ribonucleoside in mRNA + H2O = a 5'-end phospho-adenosine-phospho-ribonucleoside in mRNA + (R)-4'-phosphopantetheine + 2 H(+). Its function is as follows. RNA-binding and decapping enzyme that catalyzes the cleavage of the cap structure of snoRNAs and mRNAs in a metal-dependent manner. Part of the U8 snoRNP complex that is required for the accumulation of mature 5.8S and 28S rRNA. Has diphosphatase activity and removes m7G and/or m227G caps from U8 snoRNA and leaves a 5'monophosphate on the RNA. Also catalyzes the cleavage of the cap structure on mRNAs. Does not hydrolyze cap analog structures like 7-methylguanosine nucleoside triphosphate (m7GpppG). Also hydrolysis m7G- and m227G U3-capped RNAs but with less efficiencies. Has broad substrate specificity with manganese or cobalt as cofactor and can act on various RNA species. Binds to the U8 snoRNA; metal is not required for RNA-binding. May play a role in the regulation of snoRNAs and mRNAs degradation. Also acts as a phosphatase; hydrolyzes the non-canonical purine nucleotides inosine diphosphate (IDP) and deoxyinosine diphosphate (dITP) as well as guanosine diphosphate (GDP), deoxyguanosine diphosphate (dGDP), xanthine diphosphate (XDP), inosine triphosphate (ITP) and deoxyinosine triphosphate (ITP) to their respective monophosphate derivatives and does not distinguish between the deoxy- and ribose forms. The order of activity with different substrates is IDP &gt; dIDP &gt;&gt; GDP = dGDP &gt; XDP = ITP = dITP. Binds strongly to GTP, ITP and XTP. Participates in the hydrolysis of dIDP/IDP and probably excludes non-canonical purines from RNA and DNA precursor pools, thus preventing their incorporation into RNA and DNA and avoiding chromosomal lesions. Exhibits decapping activity towards NAD-capped RNAs and FAD-capped RNAs. Exhibits decapping activity towards dpCoA-capped RNAs in vitro. In Bos taurus (Bovine), this protein is U8 snoRNA-decapping enzyme (NUDT16).